Here is a 119-residue protein sequence, read N- to C-terminus: uncharacterized protein (119 aa).

Its subcellular location is the mitochondrion. The protein resides in the nucleus. This is an uncharacterized protein from Schizosaccharomyces pombe (strain 972 / ATCC 24843) (Fission yeast).